The sequence spans 378 residues: SWI/SNF-related matrix-associated actin-dependent regulator of chromatin subfamily B member 1 (378 aa).

The interval 1–106 is DNA-binding; sequence MIMALSKTFG…DEKYKAVSIS (106 aa).

Belongs to the SNF5 family. In terms of assembly, component of the multiprotein chromatin-remodeling complexes SWI/SNF. Component of neural progenitors-specific chromatin remodeling complex (npBAF complex) and the neuron-specific chromatin remodeling complex (nBAF complex). Component of the BAF (SWI/SNF) chromatin remodeling complex. Component of the SWI/SNF-B (PBAF) chromatin remodeling complex. Binds to double-stranded DNA.

It localises to the nucleus. Involved in chromatin-remodeling. Core component of the BAF (SWI/SNF) complex. This ATP-dependent chromatin-remodeling complex plays important roles in cell proliferation and differentiation, in cellular antiviral activities and inhibition of tumor formation. Belongs to the neural progenitors-specific chromatin remodeling complex (npBAF complex) and the neuron-specific chromatin remodeling complex (nBAF complex) and may play a role in neural development. This is SWI/SNF-related matrix-associated actin-dependent regulator of chromatin subfamily B member 1 (smarcb1) from Xenopus laevis (African clawed frog).